Reading from the N-terminus, the 62-residue chain is Large ribosomal subunit protein bL28 (62 aa).

This sequence belongs to the bacterial ribosomal protein bL28 family.

The polypeptide is Large ribosomal subunit protein bL28 (Syntrophomonas wolfei subsp. wolfei (strain DSM 2245B / Goettingen)).